A 138-amino-acid polypeptide reads, in one-letter code: MLQPARRKFRKEQKGRNTGLATRGADVSFGDFGLKAVGRGRLTARQIEAARRAMTRHIKRGGRIWIRIFPDKPISRKPAEVRMGNGKGAPEYYVAEIQPGKVLYEMDGVNEQLAREAFRLAAAKLPIATTFVTRLIGS.

The segment covering methionine 1–glutamine 13 has biased composition (basic residues). The segment at methionine 1 to threonine 22 is disordered.

The protein belongs to the universal ribosomal protein uL16 family. As to quaternary structure, part of the 50S ribosomal subunit.

Its function is as follows. Binds 23S rRNA and is also seen to make contacts with the A and possibly P site tRNAs. The sequence is that of Large ribosomal subunit protein uL16 from Thiobacillus denitrificans (strain ATCC 25259 / T1).